The sequence spans 183 residues: Peptide deformylase (183 aa).

Fe cation contacts are provided by C110 and H153. E154 is a catalytic residue. H157 contributes to the Fe cation binding site.

The protein belongs to the polypeptide deformylase family. Requires Fe(2+) as cofactor.

The enzyme catalyses N-terminal N-formyl-L-methionyl-[peptide] + H2O = N-terminal L-methionyl-[peptide] + formate. In terms of biological role, removes the formyl group from the N-terminal Met of newly synthesized proteins. Requires at least a dipeptide for an efficient rate of reaction. N-terminal L-methionine is a prerequisite for activity but the enzyme has broad specificity at other positions. The polypeptide is Peptide deformylase (Listeria monocytogenes serotype 4b (strain CLIP80459)).